The following is a 481-amino-acid chain: UDP-glycosyltransferase 88F4 (481 aa).

UDP-alpha-D-glucose contacts are provided by residues S288, 357-358 (WA), 375-383 (HCGWNSVLE), and 397-400 (YAEQ).

This sequence belongs to the UDP-glycosyltransferase family.

Its function is as follows. Glycosyltransferase that may possess chalcone and dihydrochalcone 2'-O-glucosyltransferase activity. The polypeptide is UDP-glycosyltransferase 88F4 (Malus domestica (Apple)).